The following is a 201-amino-acid chain: Pyridoxal 5'-phosphate synthase subunit PdxT (201 aa).

Residue 49–51 (GES) participates in L-glutamine binding. Cys81 (nucleophile) is an active-site residue. L-glutamine is bound by residues Arg110 and 139-140 (IR). Active-site charge relay system residues include His175 and Glu177.

Belongs to the glutaminase PdxT/SNO family. In terms of assembly, in the presence of PdxS, forms a dodecamer of heterodimers. Only shows activity in the heterodimer.

It catalyses the reaction aldehydo-D-ribose 5-phosphate + D-glyceraldehyde 3-phosphate + L-glutamine = pyridoxal 5'-phosphate + L-glutamate + phosphate + 3 H2O + H(+). It carries out the reaction L-glutamine + H2O = L-glutamate + NH4(+). Its pathway is cofactor biosynthesis; pyridoxal 5'-phosphate biosynthesis. Catalyzes the hydrolysis of glutamine to glutamate and ammonia as part of the biosynthesis of pyridoxal 5'-phosphate. The resulting ammonia molecule is channeled to the active site of PdxS. The polypeptide is Pyridoxal 5'-phosphate synthase subunit PdxT (Streptomyces avermitilis (strain ATCC 31267 / DSM 46492 / JCM 5070 / NBRC 14893 / NCIMB 12804 / NRRL 8165 / MA-4680)).